Reading from the N-terminus, the 243-residue chain is UPF0758 protein Cyan7425_1778 (243 aa).

One can recognise an MPN domain in the interval 112-235; the sequence is TIINDPAVAA…FRSLRQTTKL (124 aa). Positions 184, 186, and 197 each coordinate Zn(2+). Residues 184 to 197 carry the JAMM motif motif; that stretch reads HNHPSGNVEPSPED.

Belongs to the UPF0758 family.

The chain is UPF0758 protein Cyan7425_1778 from Cyanothece sp. (strain PCC 7425 / ATCC 29141).